Consider the following 82-residue polypeptide: Small ribosomal subunit protein bS16 (82 aa).

Belongs to the bacterial ribosomal protein bS16 family.

In Proteus mirabilis (strain HI4320), this protein is Small ribosomal subunit protein bS16.